The following is a 121-amino-acid chain: Protein MGF 110-14L (121 aa).

A signal peptide spans M1–A17.

Belongs to the asfivirus MGF 110 family.

This is Protein MGF 110-14L from African swine fever virus (isolate Portugal/Lis 57/1957) (ASFV).